A 396-amino-acid chain; its full sequence is MVIKPKIRGFICTNAHPVGCEAHVNEQIAYVKAQTSATSGPKNVLVIGASTGYGLASRITSTFGHDAKTLGIFFEKPPTEKKTGSAGWYNTAAFVKAADEAGIYAKNINGDAFSHEIKAKAIEAIKADMGTVDLVVYSLASPRRTDPDTGEVYSSTLKPIGQSVTTKNLNTSKRVIDEVSVEAANDAEIQGTIDVMGGADWELWMNALGEAGVLAEGVKTVAYTYIGKELTWPIYGKATIGKAKEDLDRAATAINAATADLNGQARVTSLNAVVTQASSAIPIMPLYISAMFKVMKADGTYEGCIEQIANLFKENIYSDSPRLDEEGRFRQNYKELEDSVQKRVTDIWNSVDTDTIDELTDYVAYHQEFLKLFGFGIDGVDYDADVSPEVAINNLT.

NAD(+) is bound by residues 48–53 (GASTGY), 74–75 (FE), 111–112 (DA), and 139–140 (LA). Y225 serves as a coordination point for substrate. The active-site Proton donor is the Y235. Residues K244 and 273-275 (VVT) each bind NAD(+).

Belongs to the TER reductase family. Monomer.

The catalysed reaction is a 2,3-saturated acyl-[ACP] + NAD(+) = a (2E)-enoyl-[ACP] + NADH + H(+). It participates in lipid metabolism; fatty acid biosynthesis. Involved in the final reduction of the elongation cycle of fatty acid synthesis (FAS II). Catalyzes the reduction of a carbon-carbon double bond in an enoyl moiety that is covalently linked to an acyl carrier protein (ACP). The sequence is that of Enoyl-[acyl-carrier-protein] reductase [NADH] from Colwellia psychrerythraea (strain 34H / ATCC BAA-681) (Vibrio psychroerythus).